We begin with the raw amino-acid sequence, 411 residues long: Multifunctional CCA protein (411 aa).

Residues Gly-8 and Arg-11 each contribute to the ATP site. Positions 8 and 11 each coordinate CTP. Positions 21 and 23 each coordinate Mg(2+). ATP-binding residues include Arg-91, Arg-137, and Arg-140. Arg-91, Arg-137, and Arg-140 together coordinate CTP. Residues 228–333 (SGVHTLLVIE…LKVFNALDIW (106 aa)) enclose the HD domain.

Belongs to the tRNA nucleotidyltransferase/poly(A) polymerase family. Bacterial CCA-adding enzyme type 1 subfamily. Monomer. Can also form homodimers and oligomers. Mg(2+) is required as a cofactor. It depends on Ni(2+) as a cofactor.

It carries out the reaction a tRNA precursor + 2 CTP + ATP = a tRNA with a 3' CCA end + 3 diphosphate. The catalysed reaction is a tRNA with a 3' CCA end + 2 CTP + ATP = a tRNA with a 3' CCACCA end + 3 diphosphate. Functionally, catalyzes the addition and repair of the essential 3'-terminal CCA sequence in tRNAs without using a nucleic acid template. Adds these three nucleotides in the order of C, C, and A to the tRNA nucleotide-73, using CTP and ATP as substrates and producing inorganic pyrophosphate. tRNA 3'-terminal CCA addition is required both for tRNA processing and repair. Also involved in tRNA surveillance by mediating tandem CCA addition to generate a CCACCA at the 3' terminus of unstable tRNAs. While stable tRNAs receive only 3'-terminal CCA, unstable tRNAs are marked with CCACCA and rapidly degraded. The sequence is that of Multifunctional CCA protein from Actinobacillus pleuropneumoniae serotype 5b (strain L20).